A 695-amino-acid chain; its full sequence is Lasso peptide isopeptidase AtxE2 (695 aa).

A signal peptide spans 1 to 30; that stretch reads MRSSKIRCPGAIRVGTLVTAFGCLPHVAFA. 2 disulfides stabilise this stretch: Cys-296-Cys-301 and Cys-354-Cys-363. Catalysis depends on Ser-527, which acts as the Nucleophile. An intrachain disulfide couples Cys-551 to Cys-552. Active-site charge relay system residues include Glu-610 and His-638.

The protein localises to the cytoplasm. In terms of biological role, lasso peptide isopeptidase that specifically hydrolyzes Astexin-2 and Astexin-3, converting them to linear peptides. Has only a few specific contacts with substrates, because it recognizes Astexin knotted structure (principally the loop structure). Its binding to lasso peptides opens them to expose the isopeptide bonds for hydrolysis. The sequence is that of Lasso peptide isopeptidase AtxE2 from Asticcacaulis excentricus (strain ATCC 15261 / DSM 4724 / KCTC 12464 / NCIMB 9791 / VKM B-1370 / CB 48).